The chain runs to 476 residues: Alpha-1,3/1,6-mannosyltransferase ALG2 (476 aa).

An N-linked (GlcNAc...) asparagine glycan is attached at N7. A helical transmembrane segment spans residues 80 to 100 (FHILFAIIRQFYLVLALIFTG). An N-linked (GlcNAc...) asparagine glycan is attached at N257. Residues 449–469 (GILYGILKMWRIELLFVLISY) form a helical membrane-spanning segment.

This sequence belongs to the glycosyltransferase group 1 family.

It localises to the endoplasmic reticulum membrane. It carries out the reaction a beta-D-Man-(1-&gt;4)-beta-D-GlcNAc-(1-&gt;4)-alpha-D-GlcNAc-diphospho-di-trans,poly-cis-dolichol + GDP-alpha-D-mannose = an alpha-D-Man-(1-&gt;3)-beta-D-Man-(1-&gt;4)-beta-D-GlcNAc-(1-&gt;4)-alpha-D-GlcNAc-diphospho-di-trans,poly-cis-dolichol + GDP + H(+). The enzyme catalyses an alpha-D-Man-(1-&gt;3)-beta-D-Man-(1-&gt;4)-beta-D-GlcNAc-(1-&gt;4)-alpha-D-GlcNAc-diphospho-di-trans,poly-cis-dolichol + GDP-alpha-D-mannose = an alpha-D-Man-(1-&gt;3)-[alpha-D-Man-(1-&gt;6)]-beta-D-Man-(1-&gt;4)-beta-D-GlcNAc-(1-&gt;4)-alpha-D-GlcNAc-diphospho-di-trans,poly-cis-dolichol + GDP + H(+). It participates in protein modification; protein glycosylation. Its function is as follows. Mannosylates Man(2)GlcNAc(2)-dolichol diphosphate and Man(1)GlcNAc(2)-dolichol diphosphate to form Man(3)GlcNAc(2)-dolichol diphosphate. This Debaryomyces hansenii (strain ATCC 36239 / CBS 767 / BCRC 21394 / JCM 1990 / NBRC 0083 / IGC 2968) (Yeast) protein is Alpha-1,3/1,6-mannosyltransferase ALG2 (ALG2).